We begin with the raw amino-acid sequence, 216 residues long: Nucleoside triphosphate pyrophosphatase (216 aa).

The Proton acceptor role is filled by aspartate 86.

Belongs to the Maf family. Requires a divalent metal cation as cofactor.

It is found in the cytoplasm. The enzyme catalyses a ribonucleoside 5'-triphosphate + H2O = a ribonucleoside 5'-phosphate + diphosphate + H(+). It catalyses the reaction a 2'-deoxyribonucleoside 5'-triphosphate + H2O = a 2'-deoxyribonucleoside 5'-phosphate + diphosphate + H(+). Functionally, nucleoside triphosphate pyrophosphatase. May have a dual role in cell division arrest and in preventing the incorporation of modified nucleotides into cellular nucleic acids. This chain is Nucleoside triphosphate pyrophosphatase, found in Dictyostelium discoideum (Social amoeba).